The sequence spans 356 residues: Phosphoribosylformylglycinamidine cyclo-ligase (356 aa).

This sequence belongs to the AIR synthase family.

The protein resides in the cytoplasm. It catalyses the reaction 2-formamido-N(1)-(5-O-phospho-beta-D-ribosyl)acetamidine + ATP = 5-amino-1-(5-phospho-beta-D-ribosyl)imidazole + ADP + phosphate + H(+). Its pathway is purine metabolism; IMP biosynthesis via de novo pathway; 5-amino-1-(5-phospho-D-ribosyl)imidazole from N(2)-formyl-N(1)-(5-phospho-D-ribosyl)glycinamide: step 2/2. This chain is Phosphoribosylformylglycinamidine cyclo-ligase, found in Rhizobium meliloti (strain 1021) (Ensifer meliloti).